The following is a 251-amino-acid chain: Aquaporin (251 aa).

The Cytoplasmic segment spans residues 1-11 (MAKEALKTLQS). A helical membrane pass occupies residues 12-32 (MFGEMVASFVFGFAVYSAILG). Residues 33 to 42 (SSISQSSADK) lie on the Extracellular side of the membrane. The chain crosses the membrane as a helical span at residues 43-63 (VIVGLTVGFSGIGVIYSFCDV). Over 64-86 (TIAHFNPAITLAAILTSKIDVLQ) the chain is Cytoplasmic. An NPA motif is present at residues 69–71 (NPA). The helical transmembrane segment at 87 to 107 (GLGYMLAQYIGFMLAVCALLV) threads the bilayer. At 108-133 (CSPVEYKETLDTIRPGPTDFGATSLN) the chain is on the extracellular side. The helical transmembrane segment at 134 to 154 (VFFAEFFLTAIFVHIVFATAV) threads the bilayer. Residues 155 to 179 (NPYKPKVDTEGKFVDPDEKEPVDRR) are Cytoplasmic-facing. Residues 180 to 200 (ITAPLCIGLTLGFLAFMGLAS) traverse the membrane as a helical segment. At 201–224 (SGGAFNPGLTFAPMAMSNTWSHFW) the chain is on the extracellular side. Positions 206–208 (NPG) match the NPG motif. Residues 225–245 (IYLGGQYLGGLTGGLLQVLVL) form a helical membrane-spanning segment. Over 246–251 (YKLSSD) the chain is Cytoplasmic.

This sequence belongs to the MIP/aquaporin (TC 1.A.8) family.

The protein resides in the cell membrane. Its function is as follows. Water channel required to facilitate the transport of water across membranes. Involved in osmotolerance. The sequence is that of Aquaporin (AQP) from Encephalitozoon intestinalis (Microsporidian parasite).